Reading from the N-terminus, the 497-residue chain is Glutamyl-tRNA(Gln) amidotransferase subunit A (497 aa).

Active-site charge relay system residues include Lys91 and Ser166. Positions 143–171 (SSTENSAYGPTHNPWDLERTAGGSGGGSS) are disordered. Ser190 serves as the catalytic Acyl-ester intermediate.

The protein belongs to the amidase family. GatA subfamily. In terms of assembly, heterotrimer of A, B and C subunits.

The catalysed reaction is L-glutamyl-tRNA(Gln) + L-glutamine + ATP + H2O = L-glutaminyl-tRNA(Gln) + L-glutamate + ADP + phosphate + H(+). Allows the formation of correctly charged Gln-tRNA(Gln) through the transamidation of misacylated Glu-tRNA(Gln) in organisms which lack glutaminyl-tRNA synthetase. The reaction takes place in the presence of glutamine and ATP through an activated gamma-phospho-Glu-tRNA(Gln). This Corynebacterium glutamicum (strain R) protein is Glutamyl-tRNA(Gln) amidotransferase subunit A.